We begin with the raw amino-acid sequence, 147 residues long: MNPAHLLVLSAVCVSLLGAANIPPHPLNLINFMEMIRYTIPCEKTWGEYADYGCYCGAGGSGRPIDALDRCCYVHDNCYGDAEKKHKCNPKTQSYSYKLTKRTIICYGAAGTCGRIVCDCDRTAALCFGNSEYIEGHKNIDTARFCQ.

The first 19 residues, 1–19 (MNPAHLLVLSAVCVSLLGA), serve as a signal peptide directing secretion. The propeptide occupies 20–27 (ANIPPHPL). 6 cysteine pairs are disulfide-bonded: Cys54–Cys146, Cys56–Cys72, Cys71–Cys127, Cys78–Cys120, Cys88–Cys113, and Cys106–Cys118. Ca(2+) contacts are provided by Tyr55, Gly57, and Gly59. The active site involves His75. Asp76 lines the Ca(2+) pocket. Asp121 is a catalytic residue.

The protein belongs to the phospholipase A2 family. Group I subfamily. D49 sub-subfamily. As to quaternary structure, heterodimer; disulfide-linked. The A chains have phospholipase A2 activity and the B chains show homology with the basic protease inhibitors. The A1 chain is found in beta-1 and beta-2 bungarotoxins. Requires Ca(2+) as cofactor. In terms of tissue distribution, expressed by the venom gland.

The protein resides in the secreted. The enzyme catalyses a 1,2-diacyl-sn-glycero-3-phosphocholine + H2O = a 1-acyl-sn-glycero-3-phosphocholine + a fatty acid + H(+). Functionally, snake venom phospholipase A2 (PLA2) that inhibits neuromuscular transmission by blocking acetylcholine release from the nerve termini. PLA2 catalyzes the calcium-dependent hydrolysis of the 2-acyl groups in 3-sn-phosphoglycerides. This chain is Basic phospholipase A2 beta-bungarotoxin A1 chain, found in Bungarus multicinctus (Many-banded krait).